The primary structure comprises 335 residues: Biotin synthase (335 aa).

A Radical SAM core domain is found at 51–278 (NTVQLSSLLS…LAKVRLSAGR (228 aa)). [4Fe-4S] cluster contacts are provided by C66, C70, and C73. Positions 110, 141, 201, and 273 each coordinate [2Fe-2S] cluster.

This sequence belongs to the radical SAM superfamily. Biotin synthase family. As to quaternary structure, homodimer. It depends on [4Fe-4S] cluster as a cofactor. Requires [2Fe-2S] cluster as cofactor.

The catalysed reaction is (4R,5S)-dethiobiotin + (sulfur carrier)-SH + 2 reduced [2Fe-2S]-[ferredoxin] + 2 S-adenosyl-L-methionine = (sulfur carrier)-H + biotin + 2 5'-deoxyadenosine + 2 L-methionine + 2 oxidized [2Fe-2S]-[ferredoxin]. The protein operates within cofactor biosynthesis; biotin biosynthesis; biotin from 7,8-diaminononanoate: step 2/2. Functionally, catalyzes the conversion of dethiobiotin (DTB) to biotin by the insertion of a sulfur atom into dethiobiotin via a radical-based mechanism. The sequence is that of Biotin synthase from Bordetella pertussis (strain Tohama I / ATCC BAA-589 / NCTC 13251).